A 487-amino-acid polypeptide reads, in one-letter code: 3-octaprenyl-4-hydroxybenzoate carboxy-lyase (487 aa).

Asn172 serves as a coordination point for Mn(2+). Residues 175 to 177, 189 to 191, and 194 to 195 contribute to the prenylated FMN site; these read IYR, RWL, and RG. A Mn(2+)-binding site is contributed by Glu238. The Proton donor role is filled by Asp287.

Belongs to the UbiD family. As to quaternary structure, homohexamer. The cofactor is prenylated FMN. Mn(2+) serves as cofactor.

The protein localises to the cell membrane. The enzyme catalyses a 4-hydroxy-3-(all-trans-polyprenyl)benzoate + H(+) = a 2-(all-trans-polyprenyl)phenol + CO2. It participates in cofactor biosynthesis; ubiquinone biosynthesis. Catalyzes the decarboxylation of 3-octaprenyl-4-hydroxy benzoate to 2-octaprenylphenol, an intermediate step in ubiquinone biosynthesis. In Nitrosomonas eutropha (strain DSM 101675 / C91 / Nm57), this protein is 3-octaprenyl-4-hydroxybenzoate carboxy-lyase.